The following is a 367-amino-acid chain: MVKETHRFEPFTEEPIRLIGEEGEWLGDFPLDLEGEKLRRLYRDMLAARMLDERYTILIRTGKTSFIAPAAGHEAAQVAIAHAIRPGFDWVFPYYRDHGLALALGIPLKELFGQMLATKADPNKGRQMPEHPGSKALNFFTVASPIASHVPPAAGAAISMKLLRTGQVAVCTFGDGATSEGDWYAGINFAAVQGAPAVFVCENNFYAISVDYRHQTHSPTIADKAHAFGIPGYLVDGMDVLASYYVVKEAVERARRGEGPSLVELRVYRYGPHSSADDDSRYRPKEEVAFWRKKDPIPRFRRFLEARGLWNEEWEEDVREEIRAELERGLKEAEEAGPVPPEWMFADVFAEKPWHLLRQEALLKEEL.

Residues F66, Y95, 128 to 131 (MPEH), and S144 each bind substrate. 94-96 (YYR) provides a ligand contact to thiamine diphosphate. Thiamine diphosphate is bound by residues 144–146 (SPI), 174–180 (GDGATSE), 204–208 (NFYAI), and H273. Residues D175, N204, and Y206 each contribute to the Mg(2+) site.

The protein belongs to the BCKDHA family. In terms of assembly, heterotetramer of two alpha and two beta chains. Directly associated with ODBB in the E1 complex. It depends on thiamine diphosphate as a cofactor.

It catalyses the reaction N(6)-[(R)-lipoyl]-L-lysyl-[protein] + 3-methyl-2-oxobutanoate + H(+) = N(6)-[(R)-S(8)-2-methylpropanoyldihydrolipoyl]-L-lysyl-[protein] + CO2. Its function is as follows. The branched-chain alpha-keto dehydrogenase complex catalyzes the overall conversion of alpha-keto acids to acyl-CoA and CO(2). It contains multiple copies of three enzymatic components: branched-chain alpha-keto acid decarboxylase (E1), lipoamide acyltransferase (E2) and lipoamide dehydrogenase (E3). In Thermus thermophilus (strain ATCC BAA-163 / DSM 7039 / HB27), this protein is 2-oxoisovalerate dehydrogenase subunit alpha.